Here is a 614-residue protein sequence, read N- to C-terminus: uncharacterized protein (614 aa).

Transmembrane regions (helical) follow at residues G41–F61, L87–V107, D157–G177, and V178–F198. The ABC transmembrane type-1 domain maps to I43–E330. Positions I364–H603 constitute an ABC transporter domain. G397–S404 serves as a coordination point for ATP.

It belongs to the ABC transporter superfamily.

The protein localises to the cell membrane. This is an uncharacterized protein from Haemophilus influenzae (strain ATCC 51907 / DSM 11121 / KW20 / Rd).